We begin with the raw amino-acid sequence, 383 residues long: N-acetyldiaminopimelate deacetylase (383 aa).

The active site involves aspartate 72. Glutamate 131 serves as the catalytic Proton acceptor.

It belongs to the peptidase M20A family. N-acetyldiaminopimelate deacetylase subfamily.

The enzyme catalyses N-acetyl-(2S,6S)-2,6-diaminopimelate + H2O = (2S,6S)-2,6-diaminopimelate + acetate. It participates in amino-acid biosynthesis; L-lysine biosynthesis via DAP pathway; LL-2,6-diaminopimelate from (S)-tetrahydrodipicolinate (acetylase route): step 3/3. Functionally, catalyzes the conversion of N-acetyl-diaminopimelate to diaminopimelate and acetate. The protein is N-acetyldiaminopimelate deacetylase of Lacticaseibacillus paracasei (strain ATCC 334 / BCRC 17002 / CCUG 31169 / CIP 107868 / KCTC 3260 / NRRL B-441) (Lactobacillus paracasei).